The following is a 285-amino-acid chain: Neuralized-like protein 2 (285 aa).

Residues 1-28 (MADPSEHVGLGGPRSPARPEPPPTRFHQ) are disordered. In terms of domain architecture, NHR spans 23–244 (PTRFHQVHGA…STKSVRLVQL (222 aa)). The SOCS box domain occupies 250–285 (SLQTLCRLVIHKRVVHRLAIDVLHLPKGLKDFCKYE).

As to quaternary structure, probable component the ECS(NEURL2) E3 ubiquitin-protein ligase complex consisting of ELOB/Elongin B, ELOC/Elongin C, CUL5, RBX1 and NEURL2. Interacts with CTNNB1. In terms of tissue distribution, expressed specifically in skeletal and cardiac muscles.

The protein localises to the cytoplasm. It functions in the pathway protein modification; protein ubiquitination. Functionally, plays an important role in the process of myofiber differentiation and maturation. Probable substrate-recognition component of a SCF-like ECS (Elongin BC-CUL2/5-SOCS-box protein) E3 ubiquitin-protein ligase complex, which mediates the ubiquitination of proteins. Probably contributes to catalysis through recognition and positioning of the substrate and the ubiquitin-conjugating enzyme. During myogenesis, controls the ubiquitination and degradation of the specific pool of CTNNB1/beta-catenin located at the sarcolemma. The protein is Neuralized-like protein 2 (Neurl2) of Mus musculus (Mouse).